A 160-amino-acid chain; its full sequence is Ribosomal RNA large subunit methyltransferase H (160 aa).

S-adenosyl-L-methionine contacts are provided by residues Leu76, Gly108, and 127–132 (LGKMTW).

The protein belongs to the RNA methyltransferase RlmH family. As to quaternary structure, homodimer.

It is found in the cytoplasm. It catalyses the reaction pseudouridine(1915) in 23S rRNA + S-adenosyl-L-methionine = N(3)-methylpseudouridine(1915) in 23S rRNA + S-adenosyl-L-homocysteine + H(+). Its function is as follows. Specifically methylates the pseudouridine at position 1915 (m3Psi1915) in 23S rRNA. The sequence is that of Ribosomal RNA large subunit methyltransferase H from Rhizobium etli (strain ATCC 51251 / DSM 11541 / JCM 21823 / NBRC 15573 / CFN 42).